Reading from the N-terminus, the 275-residue chain is Methylglyoxal reductase DkgA (275 aa).

Tyr51 serves as the catalytic Proton donor. Substrate is bound at residue His107. 187–241 (SPLAQGGKGVFDQKVIRDLADKYGKTPAQIVIRWHLDSGLVVIPKSVTPSRIAEN) serves as a coordination point for NADP(+).

It belongs to the aldo/keto reductase family. Monomer.

The protein localises to the cytoplasm. It catalyses the reaction hydroxyacetone + NADP(+) = methylglyoxal + NADPH + H(+). It carries out the reaction a primary alcohol + NADP(+) = an aldehyde + NADPH + H(+). The enzyme catalyses 2-dehydro-L-idonate + NADP(+) = 2,5-didehydro-D-gluconate + NADPH + H(+). Aldo-keto reductase that significantly contributes to cellular methylglyoxal detoxification by catalyzing the NADPH-dependent conversion of methylglyoxal to acetol. It also exhibits fairly high activity with glyoxal. Shows broad specificity and can use aromatic aldehydes such as 4-nitrobenzaldehyde, 3-nitrobenzaldehyde and benzaldehyde, and phenylglyoxal. Shows beta-keto ester reductase activity toward ethyl acetoacetate and a variety of 2-substituted derivatives. Also catalyzes the reduction of 2,5-diketo-D-gluconic acid (25DKG) to 2-keto-L-gulonic acid (2KLG) and could be involved in ketogluconate metabolism. However, the specific activity of the enzyme toward 2,5-diketo-D-gluconate was reported to be almost 400-fold lower than its activity toward methylglyoxal. Can catalyze in vitro the NADPH-dependent reduction of furfural, a natural product of lignocellulosic decomposition, to the less toxic product, furfuryl alcohol. However, it is unlikely that furfural is a physiological substrate. The chain is Methylglyoxal reductase DkgA from Escherichia coli (strain K12).